We begin with the raw amino-acid sequence, 209 residues long: Uracil phosphoribosyltransferase (209 aa).

5-phospho-alpha-D-ribose 1-diphosphate is bound by residues R79, R104, and 131-139; that span reads DPMLATGNS. Uracil is bound by residues I194 and 199–201; that span reads GDA. A 5-phospho-alpha-D-ribose 1-diphosphate-binding site is contributed by D200.

Belongs to the UPRTase family. It depends on Mg(2+) as a cofactor.

It carries out the reaction UMP + diphosphate = 5-phospho-alpha-D-ribose 1-diphosphate + uracil. It participates in pyrimidine metabolism; UMP biosynthesis via salvage pathway; UMP from uracil: step 1/1. Allosterically activated by GTP. Catalyzes the conversion of uracil and 5-phospho-alpha-D-ribose 1-diphosphate (PRPP) to UMP and diphosphate. The protein is Uracil phosphoribosyltransferase of Polaromonas naphthalenivorans (strain CJ2).